Here is a 407-residue protein sequence, read N- to C-terminus: Phosphopentomutase (407 aa).

Residues D10, D306, H311, D347, H348, and H359 each coordinate Mn(2+).

This sequence belongs to the phosphopentomutase family. It depends on Mn(2+) as a cofactor.

It is found in the cytoplasm. The catalysed reaction is 2-deoxy-alpha-D-ribose 1-phosphate = 2-deoxy-D-ribose 5-phosphate. It catalyses the reaction alpha-D-ribose 1-phosphate = D-ribose 5-phosphate. It functions in the pathway carbohydrate degradation; 2-deoxy-D-ribose 1-phosphate degradation; D-glyceraldehyde 3-phosphate and acetaldehyde from 2-deoxy-alpha-D-ribose 1-phosphate: step 1/2. In terms of biological role, isomerase that catalyzes the conversion of deoxy-ribose 1-phosphate (dRib-1-P) and ribose 1-phosphate (Rib-1-P) to deoxy-ribose 5-phosphate (dRib-5-P) and ribose 5-phosphate (Rib-5-P), respectively. This Pectobacterium carotovorum subsp. carotovorum (strain PC1) protein is Phosphopentomutase.